The chain runs to 314 residues: Methionyl-tRNA formyltransferase (314 aa).

110 to 113 (SLLP) serves as a coordination point for (6S)-5,6,7,8-tetrahydrofolate.

Belongs to the Fmt family.

The catalysed reaction is L-methionyl-tRNA(fMet) + (6R)-10-formyltetrahydrofolate = N-formyl-L-methionyl-tRNA(fMet) + (6S)-5,6,7,8-tetrahydrofolate + H(+). Functionally, attaches a formyl group to the free amino group of methionyl-tRNA(fMet). The formyl group appears to play a dual role in the initiator identity of N-formylmethionyl-tRNA by promoting its recognition by IF2 and preventing the misappropriation of this tRNA by the elongation apparatus. In Bacillus cereus (strain ATCC 14579 / DSM 31 / CCUG 7414 / JCM 2152 / NBRC 15305 / NCIMB 9373 / NCTC 2599 / NRRL B-3711), this protein is Methionyl-tRNA formyltransferase.